The sequence spans 504 residues: GTPase Obg (504 aa).

The Obg domain maps to 2 to 159 (SQFVDRVVLH…KDVTLELKSM (158 aa)). A disordered region spans residues 68 to 88 (AERGNNGAGDDRHGARGKDLT). The 181-residue stretch at 160–340 (ADVGLVGFPS…LRFALMDIVR (181 aa)) folds into the OBG-type G domain. GTP contacts are provided by residues 166 to 173 (GFPSAGKS), 191 to 195 (FTTLA), 212 to 215 (DVPG), 292 to 295 (NKMD), and 321 to 323 (STV). The Mg(2+) site is built by Ser-173 and Thr-193. One can recognise an OCT domain in the interval 364 to 444 (KRKGRFADFE…IGGITFEWDP (81 aa)). Positions 449–481 (GVDQTPAYGRGKDRRLEQTDRVTAEQRKRASQA) are disordered. Positions 458 to 476 (RGKDRRLEQTDRVTAEQRK) are enriched in basic and acidic residues.

This sequence belongs to the TRAFAC class OBG-HflX-like GTPase superfamily. OBG GTPase family. In terms of assembly, monomer. The cofactor is Mg(2+).

It is found in the cytoplasm. In terms of biological role, an essential GTPase which binds GTP, GDP and possibly (p)ppGpp with moderate affinity, with high nucleotide exchange rates and a fairly low GTP hydrolysis rate. Plays a role in control of the cell cycle, stress response, ribosome biogenesis and in those bacteria that undergo differentiation, in morphogenesis control. The polypeptide is GTPase Obg (Corynebacterium urealyticum (strain ATCC 43042 / DSM 7109)).